A 365-amino-acid polypeptide reads, in one-letter code: NAC domain-containing protein 37 (365 aa).

The 150-residue stretch at 9 to 158 (VPPGFRFHPT…GWVVCRAFKK (150 aa)) folds into the NAC domain. A DNA-binding region spans residues 109-164 (IGMRKTLVFYKGRAPNGKKSDWIMHEYRLESDENAPPQEEGWVVCRAFKKRATGQA).

The protein belongs to the plant vascular related NAC-domain protein family. In terms of assembly, interacts with NAC030/VND7. In terms of tissue distribution, expressed in root metaxylem pole and in shoot pre-procambium and procambium. Present in root developing xylems. Specifically expressed in vessels but not in interfascicular fibers in stems.

It is found in the nucleus. Functionally, transcription activator that binds to the secondary wall NAC binding element (SNBE), 5'-(T/A)NN(C/T)(T/C/G)TNNNNNNNA(A/C)GN(A/C/T)(A/T)-3', in the promoter of target genes. Involved in xylem formation by promoting the expression of secondary wall-associated transcription factors and of genes involved in secondary wall biosynthesis and programmed cell death, genes driven by the secondary wall NAC binding element (SNBE). Triggers thickening of secondary walls. This Arabidopsis thaliana (Mouse-ear cress) protein is NAC domain-containing protein 37.